The chain runs to 102 residues: Vesicle-associated membrane protein 5 (102 aa).

Residues methionine 1–tyrosine 72 lie on the Cytoplasmic side of the membrane. Positions glutamate 5–glutamate 65 constitute a v-SNARE coiled-coil homology domain. 3 positions are modified to phosphoserine: serine 41, serine 48, and serine 49. The chain crosses the membrane as a helical; Anchor for type IV membrane protein span at residues leucine 73 to leucine 93. The Vesicular portion of the chain corresponds to proline 94 to proline 102.

Belongs to the synaptobrevin family.

The protein localises to the cell membrane. The protein resides in the endomembrane system. Its subcellular location is the golgi apparatus. It is found in the trans-Golgi network membrane. May participate in trafficking events that are associated with myogenesis, such as myoblast fusion and/or GLUT4 trafficking. This chain is Vesicle-associated membrane protein 5 (Vamp5), found in Rattus norvegicus (Rat).